A 63-amino-acid chain; its full sequence is MARITVQDAVEKVGNIFDLILVAARRARQMQIGGKETLITKNNNDKYTVLALREIEEDLITKK.

It belongs to the RNA polymerase subunit omega family. The RNAP catalytic core consists of 2 alpha, 1 beta, 1 beta' and 1 omega subunit. When a sigma factor is associated with the core the holoenzyme is formed, which can initiate transcription.

It carries out the reaction RNA(n) + a ribonucleoside 5'-triphosphate = RNA(n+1) + diphosphate. Functionally, promotes RNA polymerase assembly. Latches the N- and C-terminal regions of the beta' subunit thereby facilitating its interaction with the beta and alpha subunits. The chain is DNA-directed RNA polymerase subunit omega from Blochmanniella pennsylvanica (strain BPEN).